A 316-amino-acid chain; its full sequence is Ribose-phosphate pyrophosphokinase (316 aa).

ATP is bound by residues 37 to 39 and 96 to 97; these read DGE and RQ. Residues H130 and D171 each contribute to the Mg(2+) site. K194 is an active-site residue. R196 and D221 together coordinate D-ribose 5-phosphate.

Belongs to the ribose-phosphate pyrophosphokinase family. Class I subfamily. Homohexamer. The cofactor is Mg(2+).

Its subcellular location is the cytoplasm. It carries out the reaction D-ribose 5-phosphate + ATP = 5-phospho-alpha-D-ribose 1-diphosphate + AMP + H(+). It functions in the pathway metabolic intermediate biosynthesis; 5-phospho-alpha-D-ribose 1-diphosphate biosynthesis; 5-phospho-alpha-D-ribose 1-diphosphate from D-ribose 5-phosphate (route I): step 1/1. In terms of biological role, involved in the biosynthesis of the central metabolite phospho-alpha-D-ribosyl-1-pyrophosphate (PRPP) via the transfer of pyrophosphoryl group from ATP to 1-hydroxyl of ribose-5-phosphate (Rib-5-P). This is Ribose-phosphate pyrophosphokinase from Rhodopirellula baltica (strain DSM 10527 / NCIMB 13988 / SH1).